We begin with the raw amino-acid sequence, 344 residues long: Mitochondrial mRNA pseudouridine synthase Rpusd3 (344 aa).

Residues 1–36 constitute a mitochondrion transit peptide; that stretch reads MGALRVLRYVSMIWRPELGSCARQRDAGFGTEARRP. The tract at residues 25 to 53 is disordered; sequence RDAGFGTEARRPSQPHRSSKHKDLVEDQP.

Belongs to the pseudouridine synthase RluA family. As to quaternary structure, forms a regulatory protein-RNA complex, consisting of RCC1L, NGRN, RPUSD3, RPUSD4, TRUB2, FASTKD2 and 16S mt-rRNA.

It localises to the mitochondrion matrix. It catalyses the reaction a uridine in mRNA = a pseudouridine in mRNA. Its function is as follows. Catalyzes uridine to pseudouridine isomerization (pseudouridylation) of specific mitochondrial mRNAs (mt-mRNAs), a post-transcriptional modification necessary for their translation. Acts at position 390 in COXI mt-mRNA and at position 697-699 in mitochondrial COXIII mt-mRNA. As a component of a functional protein-RNA module, consisting of RCC1L, NGRN, RPUSD3, RPUSD4, TRUB2, FASTKD2 and 16S mitochondrial ribosomal RNA (16S mt-rRNA), controls 16S mt-rRNA abundance and may play a role in mitochondrial ribosome biogenesis. This is Mitochondrial mRNA pseudouridine synthase Rpusd3 (Rpusd3) from Mus musculus (Mouse).